A 482-amino-acid chain; its full sequence is GPI mannosyltransferase 3 (482 aa).

The helical transmembrane segment at 12-32 threads the bilayer; sequence LFAFIFIFRLANSFAIETFFQ. An N-linked (GlcNAc...) asparagine glycan is attached at Asn-80. Helical transmembrane passes span 114-134, 137-155, 175-195, and 199-219; these read KLAW…YVIT, FSNN…FWPW, IIRP…LISI, and LKWV…NTAL. Residue Asn-242 is glycosylated (N-linked (GlcNAc...) asparagine). The next 3 membrane-spanning stretches (helical) occupy residues 252 to 272, 274 to 294, and 324 to 344; these read WHFY…PLMI, GLKK…FSLI, and FVLI…NVHE.

The protein belongs to the glycosyltransferase 22 family. PIGB subfamily.

It localises to the endoplasmic reticulum membrane. It functions in the pathway glycolipid biosynthesis; glycosylphosphatidylinositol-anchor biosynthesis. Mannosyltransferase involved in glycosylphosphatidylinositol-anchor biosynthesis. Transfers the third mannose to Man2-GlcN-acyl-PI during GPI precursor assembly. This chain is GPI mannosyltransferase 3 (GPI10), found in Candida albicans (strain SC5314 / ATCC MYA-2876) (Yeast).